The sequence spans 257 residues: Type III pantothenate kinase (257 aa).

7 to 14 (DIGNSHTV) contacts ATP. 106-109 (GTDR) contributes to the substrate binding site. Catalysis depends on D108, which acts as the Proton acceptor. Residue D128 participates in K(+) binding. T132 lines the ATP pocket. T184 contacts substrate.

Belongs to the type III pantothenate kinase family. Homodimer. The cofactor is NH4(+). It depends on K(+) as a cofactor.

Its subcellular location is the cytoplasm. The enzyme catalyses (R)-pantothenate + ATP = (R)-4'-phosphopantothenate + ADP + H(+). It functions in the pathway cofactor biosynthesis; coenzyme A biosynthesis; CoA from (R)-pantothenate: step 1/5. Functionally, catalyzes the phosphorylation of pantothenate (Pan), the first step in CoA biosynthesis. This chain is Type III pantothenate kinase, found in Nocardioides sp. (strain ATCC BAA-499 / JS614).